The primary structure comprises 83 residues: Putative membrane protein insertion efficiency factor (83 aa).

The interval 64-83 is disordered; that stretch reads GGFDPVPLKKDKNSKTTHHH.

This sequence belongs to the UPF0161 family.

The protein localises to the cell membrane. Its function is as follows. Could be involved in insertion of integral membrane proteins into the membrane. The sequence is that of Putative membrane protein insertion efficiency factor from Staphylococcus epidermidis (strain ATCC 12228 / FDA PCI 1200).